A 150-amino-acid chain; its full sequence is Arginine repressor (150 aa).

The protein belongs to the ArgR family.

The protein localises to the cytoplasm. The protein operates within amino-acid biosynthesis; L-arginine biosynthesis [regulation]. In terms of biological role, regulates arginine biosynthesis genes. This is Arginine repressor from Clostridium botulinum (strain Okra / Type B1).